Here is a 540-residue protein sequence, read N- to C-terminus: Phenylalanine--tRNA ligase beta subunit (540 aa).

Residues 266-342 (LRPEKRTVSV…IAYGYDKIET (77 aa)) form the B5 domain. Positions 320, 326, 329, and 330 each coordinate Mg(2+).

It belongs to the phenylalanyl-tRNA synthetase beta subunit family. Type 2 subfamily. As to quaternary structure, tetramer of two alpha and two beta subunits. It depends on Mg(2+) as a cofactor.

Its subcellular location is the cytoplasm. It carries out the reaction tRNA(Phe) + L-phenylalanine + ATP = L-phenylalanyl-tRNA(Phe) + AMP + diphosphate + H(+). This chain is Phenylalanine--tRNA ligase beta subunit, found in Methanocorpusculum labreanum (strain ATCC 43576 / DSM 4855 / Z).